A 326-amino-acid polypeptide reads, in one-letter code: ELAV-like protein 1 (326 aa).

N-acetylserine is present on Ser-2. Phosphoserine is present on Ser-2. Residues 20–98 (TNLIVNYLPQ…KTIKVSYARP (79 aa)) form the RRM 1 domain. Phosphoserine occurs at positions 100 and 158. Residues 106 to 186 (ANLYISGLPR…EPITVKFAAN (81 aa)) form the RRM 2 domain. Residue Lys-191 forms a Glycyl lysine isopeptide (Lys-Gly) (interchain with G-Cter in SUMO2) linkage. Phosphoserine occurs at positions 197 and 202. Arg-206 carries the post-translational modification Omega-N-methylarginine. Arg-217 carries the asymmetric dimethylarginine; by CARM1; alternate modification. Omega-N-methylarginine; alternate is present on Arg-217. Phosphoserine is present on residues Ser-221 and Ser-318. Residues 244-322 (WCIFIYNLGQ…KILQVSFKTN (79 aa)) form the RRM 3 domain.

This sequence belongs to the RRM elav family. As to quaternary structure, monomer and homodimer (in vitro). Interacts with ANP32A. Interacts with ZNF385A; the interaction is indirect and mRNA-dependent and may regulate p53/TP53 expression. Identified in a mRNP complex, at least composed of DHX9, DDX3X, ELAVL1, HNRNPU, IGF2BP1, ILF3, PABPC1, PCBP2, PTBP2, STAU1, STAU2, SYNCRIP and YBX1. Interacts with AGO1 and AGO2. Interacts with IGF2BP1. Interacts with IGF2BP2 and IGF2BP3. Interacts with HNRNPL. Interacts with DHX36; this interaction occurs in a RNA-dependent manner. Interacts with ILF3; this interaction occurs in a RNA-dependent manner. Interacts with PLEKHN1. Interacts with SHFL; the interaction increases in presence of RNA. Interacts with YBX1; interaction recruits ELAVL1 on C5-methylcytosine (m5C)-containing mRNAs, thereby promoting mRNA stability. Interacts with FXR1. Phosphorylated by MAPKAPK2. Phosphorylated by PRKCD. Post-translationally, methylated at Arg-217 by CARM1 in T-cells in response to LPS challenge.

The protein resides in the cytoplasm. Its subcellular location is the nucleus. It localises to the stress granule. It is found in the P-body. Functionally, RNA-binding protein that binds to the 3'-UTR region of mRNAs and increases their stability. Involved in embryonic stem cell (ESC) differentiation: preferentially binds mRNAs that are not methylated by N6-methyladenosine (m6A), stabilizing them, promoting ESC differentiation. Has also been shown to be capable of binding to m6A-containing mRNAs and contributes to MYC stability by binding to m6A-containing MYC mRNAs. Binds to poly-U elements and AU-rich elements (AREs) in the 3'-UTR of target mRNAs. Binds avidly to the AU-rich element in FOS and IL3/interleukin-3 mRNAs. In the case of the FOS AU-rich element, binds to a core element of 27 nucleotides that contain AUUUA, AUUUUA, and AUUUUUA motifs. Binds preferentially to the 5'-UUUU[AG]UUU-3' motif in vitro. With ZNF385A, binds the 3'-UTR of p53/TP53 mRNA to control their nuclear export induced by CDKN2A. Hence, may regulate p53/TP53 expression and mediate in part the CDKN2A anti-proliferative activity. May also bind with ZNF385A the CCNB1 mRNA. Increases the stability of the leptin mRNA harboring an AU-rich element (ARE) in its 3' UTR. The polypeptide is ELAV-like protein 1 (Elavl1) (Mus musculus (Mouse)).